The following is a 1331-amino-acid chain: Disease resistance protein RUN1 (1331 aa).

A disordered region spans residues 1–20; sequence MASTSSSRASSSSSSSSTPS. In terms of domain architecture, TIR spans 25-190; that stretch reads ITYDVFLSFR…EITDSIFRRL (166 aa). Residues 34–39 and Gly-66 contribute to the NAD(+) site; that span reads RGEDTR. Glu-100 is a catalytic residue. The NB-ARC domain occupies 206–434; the sequence is SHVKEMIWRL…REPEAEILSV (229 aa). 20 LRR repeats span residues 429–452, 480–509, 540–565, 616–638, 648–673, 684–708, 709–732, 734–756, 757–779, 781–803, 804–826, 828–850, 851–873, 875–897, 898–920, 922–944, 945–967, 969–991, 992–1014, and 1017–1040; these read AEIL…IFLD, IKNL…GWEI, IKRV…AFAK, SYEL…NFDG, CSNI…SYSR, MPNL…VGNM, KKLT…IGDL, SLEI…GGNM, KSLT…IGDL, SLKY…GGNM, KSLR…IRDL, SLER…GGNM, KSLM…IGDL, SLVS…GGNM, KSLN…IGDL, SLMR…VGNM, KSLE…IGDL, and LEKL…AIDA. The Nuclear localization signal motif lies at 1287–1291; the sequence is RKRRR.

It belongs to the disease resistance TIR-NB-LRR family.

It localises to the nucleus. It is found in the cytoplasm. It carries out the reaction NAD(+) + H2O = ADP-D-ribose + nicotinamide + H(+). The catalysed reaction is NADP(+) + H2O = ADP-D-ribose 2'-phosphate + nicotinamide + H(+). In terms of biological role, disease resistance (R) protein that confers resistance to multiple powdery and downy mildew by promoting cell death. Acts as a NAD(+) hydrolase (NADase): in response to activation, catalyzes cleavage of NAD(+) into ADP-D-ribose (ADPR) and nicotinamide; NAD(+) cleavage triggering a defense system that promotes cell death. Also able to hydrolyze NADP(+), but not other NAD(+)-related molecules. This chain is Disease resistance protein RUN1, found in Vitis rotundifolia (Muscadine grape).